The chain runs to 565 residues: MQFTHKKNRSLYIPYAGPVLLEFPLLNKGSAFSLEERSNFNLLGLLPEVVETIEEQAERAWIQYQGFKTEIDKHIYLRNIQDTNETLFYRLIGNHLEEMMPVIYTPTVGAACERFSEIYRRARGVFISYQNRHNLDDILQNVPNHNVKVIVVTDGERILGLGDQGIGGMGIPIGKLSLYTTCGGISPAYTLPIVLDVGTNNQQLLDDPLYMGWRHPRITDDEYYQFVDDVIQAIKARWPDVLLQFEDFAQKNAMPLLNRYRNEICSFNDDIQGTAAVTVGTLIAASRGAGSQLSEQKIVFLGAGSAGCGIAEQIIAQIVREGVSEEEARQRVFMVDRFGLLTDGMPNLLPFQNKLVQKREHLQGWDTTNDVLSLLDVVRNVKPNILIGVSGQPGLFTEEIIREMHKHCPRPIVMPLSNPTSRVEATPQNILSWTDGEALVATGSPFAPVTLKGKQYAIAQCNNSYIFPGIGLGVIASGASRVTDEMLMAASETLAKHSPLVNNGEGPVLPELKDIQTVSRAIAFAVGKVAQEQGVAVKTSAEALLQAISDNFWLPEYRNYRRTSI.

The active-site Proton donor is the Tyr104. An NAD(+)-binding site is contributed by Arg157. The active-site Proton acceptor is Lys175. A divalent metal cation contacts are provided by Glu246, Asp247, and Asp270. Residues Asp270 and Asn418 each contribute to the NAD(+) site.

Belongs to the malic enzymes family. As to quaternary structure, homotetramer. The cofactor is Mg(2+). Mn(2+) serves as cofactor.

The enzyme catalyses (S)-malate + NAD(+) = pyruvate + CO2 + NADH. It catalyses the reaction oxaloacetate + H(+) = pyruvate + CO2. The polypeptide is NAD-dependent malic enzyme (Klebsiella pneumoniae (strain 342)).